A 255-amino-acid polypeptide reads, in one-letter code: Small ribosomal subunit protein uS2 (255 aa).

A disordered region spans residues 230-255; it reads QSSSGRDLGASSEVPVEPALEEAAEG.

This sequence belongs to the universal ribosomal protein uS2 family.

This Rhizobium leguminosarum bv. trifolii (strain WSM2304) protein is Small ribosomal subunit protein uS2.